The following is a 428-amino-acid chain: Enolase (428 aa).

Gln-164 lines the (2R)-2-phosphoglycerate pocket. Glu-206 functions as the Proton donor in the catalytic mechanism. Asp-243, Glu-286, and Asp-313 together coordinate Mg(2+). Positions 338, 367, 368, and 389 each coordinate (2R)-2-phosphoglycerate. Lys-338 serves as the catalytic Proton acceptor.

Belongs to the enolase family. The cofactor is Mg(2+).

The protein resides in the cytoplasm. It is found in the secreted. The protein localises to the cell surface. The enzyme catalyses (2R)-2-phosphoglycerate = phosphoenolpyruvate + H2O. The protein operates within carbohydrate degradation; glycolysis; pyruvate from D-glyceraldehyde 3-phosphate: step 4/5. Functionally, catalyzes the reversible conversion of 2-phosphoglycerate (2-PG) into phosphoenolpyruvate (PEP). It is essential for the degradation of carbohydrates via glycolysis. This chain is Enolase, found in Dehalococcoides mccartyi (strain ATCC BAA-2100 / JCM 16839 / KCTC 5957 / BAV1).